A 302-amino-acid polypeptide reads, in one-letter code: tRNA-cytidine(32) 2-sulfurtransferase (302 aa).

The PP-loop motif signature appears at 45-50; the sequence is SGGKDS. Positions 120, 123, and 211 each coordinate [4Fe-4S] cluster.

This sequence belongs to the TtcA family. As to quaternary structure, homodimer. Mg(2+) serves as cofactor. It depends on [4Fe-4S] cluster as a cofactor.

It is found in the cytoplasm. The catalysed reaction is cytidine(32) in tRNA + S-sulfanyl-L-cysteinyl-[cysteine desulfurase] + AH2 + ATP = 2-thiocytidine(32) in tRNA + L-cysteinyl-[cysteine desulfurase] + A + AMP + diphosphate + H(+). The protein operates within tRNA modification. In terms of biological role, catalyzes the ATP-dependent 2-thiolation of cytidine in position 32 of tRNA, to form 2-thiocytidine (s(2)C32). The sulfur atoms are provided by the cysteine/cysteine desulfurase (IscS) system. This Aeromonas hydrophila subsp. hydrophila (strain ATCC 7966 / DSM 30187 / BCRC 13018 / CCUG 14551 / JCM 1027 / KCTC 2358 / NCIMB 9240 / NCTC 8049) protein is tRNA-cytidine(32) 2-sulfurtransferase.